A 358-amino-acid chain; its full sequence is Methylthioribose-1-phosphate isomerase (358 aa).

Substrate contacts are provided by residues R54–A56, R96, and Q205. D246 acts as the Proton donor in catalysis. N256–K257 is a binding site for substrate.

This sequence belongs to the eIF-2B alpha/beta/delta subunits family. MtnA subfamily.

The catalysed reaction is 5-(methylsulfanyl)-alpha-D-ribose 1-phosphate = 5-(methylsulfanyl)-D-ribulose 1-phosphate. The protein operates within amino-acid biosynthesis; L-methionine biosynthesis via salvage pathway; L-methionine from S-methyl-5-thio-alpha-D-ribose 1-phosphate: step 1/6. Functionally, catalyzes the interconversion of methylthioribose-1-phosphate (MTR-1-P) into methylthioribulose-1-phosphate (MTRu-1-P). The chain is Methylthioribose-1-phosphate isomerase from Ectopseudomonas mendocina (strain ymp) (Pseudomonas mendocina).